Reading from the N-terminus, the 367-residue chain is Chorismate synthase (367 aa).

Arginine 48 lines the NADP(+) pocket. FMN is bound by residues arginine 125–serine 127, glycine 290, lysine 305–serine 309, and arginine 333.

Belongs to the chorismate synthase family. As to quaternary structure, homotetramer. Requires FMNH2 as cofactor.

The enzyme catalyses 5-O-(1-carboxyvinyl)-3-phosphoshikimate = chorismate + phosphate. It participates in metabolic intermediate biosynthesis; chorismate biosynthesis; chorismate from D-erythrose 4-phosphate and phosphoenolpyruvate: step 7/7. Catalyzes the anti-1,4-elimination of the C-3 phosphate and the C-6 proR hydrogen from 5-enolpyruvylshikimate-3-phosphate (EPSP) to yield chorismate, which is the branch point compound that serves as the starting substrate for the three terminal pathways of aromatic amino acid biosynthesis. This reaction introduces a second double bond into the aromatic ring system. The sequence is that of Chorismate synthase from Protochlamydia amoebophila (strain UWE25).